A 444-amino-acid chain; its full sequence is CCA-adding enzyme (444 aa).

ATP-binding residues include serine 57 and arginine 60. The CTP site is built by serine 57 and arginine 60. Aspartate 69, aspartate 71, and aspartate 124 together coordinate Mg(2+). 3 residues coordinate ATP: histidine 147, lysine 168, and tyrosine 177. CTP contacts are provided by histidine 147, lysine 168, and tyrosine 177.

This sequence belongs to the tRNA nucleotidyltransferase/poly(A) polymerase family. Archaeal CCA-adding enzyme subfamily. As to quaternary structure, homodimer. Requires Mg(2+) as cofactor.

The catalysed reaction is a tRNA precursor + 2 CTP + ATP = a tRNA with a 3' CCA end + 3 diphosphate. The enzyme catalyses a tRNA with a 3' CCA end + 2 CTP + ATP = a tRNA with a 3' CCACCA end + 3 diphosphate. Functionally, catalyzes the addition and repair of the essential 3'-terminal CCA sequence in tRNAs without using a nucleic acid template. Adds these three nucleotides in the order of C, C, and A to the tRNA nucleotide-73, using CTP and ATP as substrates and producing inorganic pyrophosphate. tRNA 3'-terminal CCA addition is required both for tRNA processing and repair. Also involved in tRNA surveillance by mediating tandem CCA addition to generate a CCACCA at the 3' terminus of unstable tRNAs. While stable tRNAs receive only 3'-terminal CCA, unstable tRNAs are marked with CCACCA and rapidly degraded. The sequence is that of CCA-adding enzyme from Methanococcus maripaludis (strain C7 / ATCC BAA-1331).